Reading from the N-terminus, the 330-residue chain is Solute-binding protein NAS141_03721 (330 aa).

Residues Met-1–Ala-27 form the signal peptide. Alpha-D-mannuronate-binding positions include Glu-75, Asn-97, Arg-153, Arg-173, Tyr-196, Asn-213 to Glu-214, and Arg-240. Residues Glu-75, Asn-97, Arg-153, Arg-173, Tyr-196, Asn-213–Glu-214, and Arg-240 contribute to the alpha-D-taluronate site.

Belongs to the bacterial solute-binding protein 7 family. The complex is comprised of an extracytoplasmic solute-binding protein and a heteromeric permease formed by two transmembrane proteins.

Its subcellular location is the periplasm. Its function is as follows. Solute-binding protein that binds D-mannuronate and D-taluronate (in vitro). Probably part of a tripartite ATP-independent periplasmic (TRAP) transport system that mediates solute transport into the cytoplasm. The protein is Solute-binding protein NAS141_03721 of Sulfitobacter sp. (strain NAS-14.1).